Here is a 184-residue protein sequence, read N- to C-terminus: Ras protein let-60 (184 aa).

Residue 10-17 (GDGGVGKS) coordinates GTP. The Effector region signature appears at 32 to 40 (YDPTIEDSY). GTP is bound by residues 57-61 (DTAGQ) and 116-119 (NKCD). Cys181 carries the cysteine methyl ester modification. Cys181 carries S-farnesyl cysteine lipidation. The propeptide at 182-184 (QIM) is removed in mature form.

It belongs to the small GTPase superfamily. Ras family. Interacts with soc-2. Interacts (in GTP-bound form) with plc-1 (via Ras-associating domain 1). Expressed in body wall muscles and in the nervous system including ganglion, nerve ring dorsal and ventral nerve cords, motor neurons and sensory tail neurons.

It localises to the cell membrane. The enzyme catalyses GTP + H2O = GDP + phosphate + H(+). GTP-binding protein with GTPase activity. The level of let-60 controls the switch between vulval and hypodermal cell fates during C.elegans vulval induction. May stimulate the guanine nucleotide exchange factor (GEF) activity of rap-1. May induce nuclear condensation. This Caenorhabditis elegans protein is Ras protein let-60.